The chain runs to 425 residues: tRNA(Ile)-lysidine synthase (425 aa).

27 to 32 (SGGLDS) provides a ligand contact to ATP.

Belongs to the tRNA(Ile)-lysidine synthase family.

It localises to the cytoplasm. The catalysed reaction is cytidine(34) in tRNA(Ile2) + L-lysine + ATP = lysidine(34) in tRNA(Ile2) + AMP + diphosphate + H(+). Ligates lysine onto the cytidine present at position 34 of the AUA codon-specific tRNA(Ile) that contains the anticodon CAU, in an ATP-dependent manner. Cytidine is converted to lysidine, thus changing the amino acid specificity of the tRNA from methionine to isoleucine. This chain is tRNA(Ile)-lysidine synthase, found in Streptococcus pneumoniae (strain Hungary19A-6).